The following is a 347-amino-acid chain: MSYQVSVAVVGATGYVGVELVRLLLFHPMVKIKYLCATQSIGSLLSSHYDHVLKDSIPVSISCFSSIDLSKVDVIFLCLPHGQSNEIVKKIHNEVKIIIDLSADFRIKDIDTYKEWYGAHCCPDLIQDFVYGLTEIYWEEIKKSRFVACPGCYATSALVPLFPLLRLRLVKSQNIIVDAKSGVSGAGRSVDQKKLFCEIHDVIKSYNISKHRHIPEIEQELCFAACQENINVQFVPNLIPVKRGMLSSIYLELEEGVSPIDIREALLVFYKDSKFIFIDEEKAITTKSVIGTNYCYIGVFPGRIPNTVIIVCNIDNLLKGASGQAVQNFNIMMSCDETTALLNIPYL.

Cysteine 152 is an active-site residue.

This sequence belongs to the NAGSA dehydrogenase family. Type 1 subfamily.

It localises to the cytoplasm. The enzyme catalyses N-acetyl-L-glutamate 5-semialdehyde + phosphate + NADP(+) = N-acetyl-L-glutamyl 5-phosphate + NADPH + H(+). Its pathway is amino-acid biosynthesis; L-arginine biosynthesis; N(2)-acetyl-L-ornithine from L-glutamate: step 3/4. Catalyzes the NADPH-dependent reduction of N-acetyl-5-glutamyl phosphate to yield N-acetyl-L-glutamate 5-semialdehyde. The chain is N-acetyl-gamma-glutamyl-phosphate reductase from Ehrlichia ruminantium (strain Gardel).